A 452-amino-acid polypeptide reads, in one-letter code: Bifunctional protein GlmU (452 aa).

Positions 1–226 (MAFSVVVLAA…AVEVEGVNNR (226 aa)) are pyrophosphorylase. Residues 8–11 (LAAG), Lys-22, Gln-73, and 78–79 (GT) contribute to the UDP-N-acetyl-alpha-D-glucosamine site. Residue Asp-102 coordinates Mg(2+). Gly-137, Glu-151, Asn-166, and Asn-224 together coordinate UDP-N-acetyl-alpha-D-glucosamine. A Mg(2+)-binding site is contributed by Asn-224. The linker stretch occupies residues 227-247 (LQLANLERALQNRQADELMTN). The interval 248–452 (GVTLLDPSRF…IPNWPRPTKK (205 aa)) is N-acetyltransferase. Arg-330 and Lys-348 together coordinate UDP-N-acetyl-alpha-D-glucosamine. His-360 functions as the Proton acceptor in the catalytic mechanism. UDP-N-acetyl-alpha-D-glucosamine is bound by residues Tyr-363 and Asn-374. Acetyl-CoA contacts are provided by residues Ala-377, 383–384 (NY), Ser-402, Ala-420, and Arg-437.

The protein in the N-terminal section; belongs to the N-acetylglucosamine-1-phosphate uridyltransferase family. In the C-terminal section; belongs to the transferase hexapeptide repeat family. In terms of assembly, homotrimer. The cofactor is Mg(2+).

It localises to the cytoplasm. It carries out the reaction alpha-D-glucosamine 1-phosphate + acetyl-CoA = N-acetyl-alpha-D-glucosamine 1-phosphate + CoA + H(+). The enzyme catalyses N-acetyl-alpha-D-glucosamine 1-phosphate + UTP + H(+) = UDP-N-acetyl-alpha-D-glucosamine + diphosphate. Its pathway is nucleotide-sugar biosynthesis; UDP-N-acetyl-alpha-D-glucosamine biosynthesis; N-acetyl-alpha-D-glucosamine 1-phosphate from alpha-D-glucosamine 6-phosphate (route II): step 2/2. It participates in nucleotide-sugar biosynthesis; UDP-N-acetyl-alpha-D-glucosamine biosynthesis; UDP-N-acetyl-alpha-D-glucosamine from N-acetyl-alpha-D-glucosamine 1-phosphate: step 1/1. The protein operates within bacterial outer membrane biogenesis; LPS lipid A biosynthesis. Catalyzes the last two sequential reactions in the de novo biosynthetic pathway for UDP-N-acetylglucosamine (UDP-GlcNAc). The C-terminal domain catalyzes the transfer of acetyl group from acetyl coenzyme A to glucosamine-1-phosphate (GlcN-1-P) to produce N-acetylglucosamine-1-phosphate (GlcNAc-1-P), which is converted into UDP-GlcNAc by the transfer of uridine 5-monophosphate (from uridine 5-triphosphate), a reaction catalyzed by the N-terminal domain. This Alteromonas mediterranea (strain DSM 17117 / CIP 110805 / LMG 28347 / Deep ecotype) protein is Bifunctional protein GlmU.